Here is a 255-residue protein sequence, read N- to C-terminus: Adenosylcobinamide-GDP ribazoletransferase (255 aa).

Transmembrane regions (helical) follow at residues 24–44 (LIAY…SLYV), 45–65 (AIYG…IYIV), 98–118 (VGAG…ISLS), 122–142 (LYIG…MMMI), 164–184 (KHDS…ALLS), and 187–207 (SIMI…MAVI).

The protein belongs to the CobS family. Mg(2+) serves as cofactor.

It localises to the cell membrane. The catalysed reaction is alpha-ribazole + adenosylcob(III)inamide-GDP = adenosylcob(III)alamin + GMP + H(+). It carries out the reaction alpha-ribazole 5'-phosphate + adenosylcob(III)inamide-GDP = adenosylcob(III)alamin 5'-phosphate + GMP + H(+). The protein operates within cofactor biosynthesis; adenosylcobalamin biosynthesis; adenosylcobalamin from cob(II)yrinate a,c-diamide: step 7/7. In terms of biological role, joins adenosylcobinamide-GDP and alpha-ribazole to generate adenosylcobalamin (Ado-cobalamin). Also synthesizes adenosylcobalamin 5'-phosphate from adenosylcobinamide-GDP and alpha-ribazole 5'-phosphate. The protein is Adenosylcobinamide-GDP ribazoletransferase of Thermoplasma acidophilum (strain ATCC 25905 / DSM 1728 / JCM 9062 / NBRC 15155 / AMRC-C165).